The chain runs to 54 residues: Small ribosomal subunit protein uS14 (54 aa).

4 residues coordinate Zn(2+): Cys19, Cys22, Cys37, and Cys40.

It belongs to the universal ribosomal protein uS14 family. Zinc-binding uS14 subfamily. In terms of assembly, part of the 30S ribosomal subunit. The cofactor is Zn(2+).

Its function is as follows. Binds 16S rRNA, required for the assembly of 30S particles. The protein is Small ribosomal subunit protein uS14 of Sulfurisphaera tokodaii (strain DSM 16993 / JCM 10545 / NBRC 100140 / 7) (Sulfolobus tokodaii).